The primary structure comprises 91 residues: Small membrane A-kinase anchor protein (91 aa).

Glycine 2 carries N-myristoyl glycine lipidation.

This sequence belongs to the small membrane AKAP family. In terms of processing, may be palmitoylated at Cys-3.

It localises to the cell membrane. Binds to type I regulatory subunits of protein kinase A and may anchor/target them to the plasma membrane. The polypeptide is Small membrane A-kinase anchor protein (Xenopus laevis (African clawed frog)).